The sequence spans 87 residues: Small ribosomal subunit protein bS20 (87 aa).

The span at 1 to 11 (MANIKSAKKRA) shows a compositional bias: basic residues. Residues 1–27 (MANIKSAKKRAVQSEKRRQHNASQRSM) are disordered.

The protein belongs to the bacterial ribosomal protein bS20 family.

In terms of biological role, binds directly to 16S ribosomal RNA. The sequence is that of Small ribosomal subunit protein bS20 from Haemophilus influenzae (strain PittEE).